The chain runs to 356 residues: Probable cytosolic iron-sulfur protein assembly protein 1 (356 aa).

WD repeat units lie at residues 34-73, 89-128, 134-173, 179-218, 244-291, and 319-356; these read GHKR…IRAE, GHDS…DYEC, EHSQ…DWYC, AHSS…ECVE, HFSG…ATLR, and AHGS…RIWT.

It belongs to the WD repeat CIA1 family.

Essential component of the cytosolic iron-sulfur (Fe/S) protein assembly machinery. Required for the maturation of extramitochondrial Fe/S proteins. This chain is Probable cytosolic iron-sulfur protein assembly protein 1, found in Malassezia globosa (strain ATCC MYA-4612 / CBS 7966) (Dandruff-associated fungus).